Reading from the N-terminus, the 258-residue chain is Probable phthiotriol/phenolphthiotriol dimycocerosates methyltransferase 2 (258 aa).

Belongs to the methyltransferase superfamily. Phthiotriol/phenolphthiotriol dimycocerosates methyltransferase family.

Its function is as follows. Catalyzes the methylation of the lipid moiety of the intermediate compounds phthiotriol and glycosylated phenolphthiotriol dimycoserosates to form phthiocerol dimycocerosates (DIM A) and glycosylated phenolphthiocerol dimycocerosates (PGL). The protein is Probable phthiotriol/phenolphthiotriol dimycocerosates methyltransferase 2 of Mycobacterium ulcerans (strain Agy99).